Consider the following 241-residue polypeptide: GTP cyclohydrolase III (241 aa).

The protein belongs to the archaeal-type GTP cyclohydrolase family.

It carries out the reaction GTP + 3 H2O = 2-amino-5-formylamino-6-(5-phospho-D-ribosylamino)pyrimidin-4(3H)-one + 2 phosphate + 2 H(+). Catalyzes the formation of 2-amino-5-formylamino-6-ribofuranosylamino-4(3H)-pyrimidinone ribonucleotide monophosphate and inorganic phosphate from GTP. Also has an independent pyrophosphate phosphohydrolase activity. This Aeropyrum pernix (strain ATCC 700893 / DSM 11879 / JCM 9820 / NBRC 100138 / K1) protein is GTP cyclohydrolase III.